A 205-amino-acid polypeptide reads, in one-letter code: MPMVVAKRNARERTRVHTVNQAFLVLKQHLPSLRQFTKRVSKLRILNAAITYIDTLLKLIQSSEAVPQSVISATLGPIVPTPVRAVHKISKPDTVISQPIRPLAPVLPRHETYLPAPIAATCAPDHSLVDYRSTFASSLAPPVPMQMPSVFSPQPTFPYMKSLLDYPTYFYQPSTAPPPPPAPTAPQSHLIVNNQLVPMPSYQCF.

The tract at residues Met-3–Val-16 is basic motif. The bHLH domain maps to Met-3–Leu-56. A helix-loop-helix motif region spans residues His-17–Leu-56.

As to expression, expressed in the ADL sensory neurons.

It localises to the nucleus. Its function is as follows. Acts as a transcriptional regulator. May mediate transcriptional activation by binding to the E-box motif 5'-CANNTG-3'. Required for the correct morphology, terminal identity and function of the ADL sensory neurons by controlling the expression of the ADL-specific gene repertoire, including chemoreceptor encoding genes, ion channel encoding genes, neuropeptides and the neurotransmitter eat-4. Regulates the expression of the srh-234 chemoreceptor encoding gene in the ADL neurons under feeding conditions. Plays a role in the chemorepulsive response toward ascaroside pheromones mediated by the ADL sensory neurons. This Caenorhabditis elegans protein is Helix-loop-helix protein 4 (hlh-4).